Consider the following 403-residue polypeptide: TBC1 domain family member 20 (403 aa).

A disordered region spans residues 1–25; it reads MALRSAQGDGPTSGHWDGGAEKADF. One can recognise a Rab-GAP TBC domain in the interval 60-246; that stretch reads LLTDEIRRKV…RLYDFFLACH (187 aa). The next 2 helical transmembrane spans lie at 238 to 258 and 367 to 387; these read LYDF…AVIV and FVKL…LAVV.

(Microbial infection) Directly interacts with the N-terminal amphipathic helix of hepatitis C virus (HCV) NS5A.

It localises to the membrane. In terms of biological role, GTPase-activating protein (GAP) specific for Rab1 and Rab2 small GTPase families for which it can accelerate the intrinsic GTP hydrolysis rate by more than five orders of magnitude. Also shows GAP activity for RAB18 GTPase. Promotes RAB18 dissociation from the endoplasmic reticulum (ER) membrane into the cytosol, probably through stimulating RAB18 GTP-hydrolysis. Involved in maintaining endoplasmic reticulum structure. The chain is TBC1 domain family member 20 from Homo sapiens (Human).